Here is an 87-residue protein sequence, read N- to C-terminus: Scorpine-like peptide Tco 41.46-2 (87 aa).

The N-terminal stretch at M1 to C19 is a signal peptide. In terms of domain architecture, BetaSPN-type CS-alpha/beta spans Q53–D87. Disulfide bonds link C56–C77, C63–C82, and C67–C84.

This sequence belongs to the long chain scorpion toxin family. Class 1 subfamily. In terms of tissue distribution, expressed by the venom gland.

Its subcellular location is the secreted. May have antibacterial activity. Its function is as follows. Inhibits voltage-gated potassium channel. In terms of biological role, does not induce hemolytic activity, lactate dehydrogenase (LDH) release from mast cells, mast cell degranulation, and antimicrobial effects. In vivo, injection into mice causes moderate edema formation, but induces very weak or no change in nociceptive sensibility. It also reduces mice locomotion, suggesting an increase in anxiety, but causes no alteration in rearing (standing on hind limbs). The sequence is that of Scorpine-like peptide Tco 41.46-2 from Tityus costatus (Brazilian scorpion).